The primary structure comprises 228 residues: Translin (228 aa).

Residues 86–90 are DNA/RNA binding; it reads RFHEH. A leucine-zipper region spans residues 177–198; sequence LDSGFRLLNLKNDSLRKRYDGL. An N6-acetyllysine modification is found at Lys187. Position 190 is a phosphoserine (Ser190). Lys199 is subject to N6-acetyllysine.

It belongs to the translin family. As to quaternary structure, ring-shaped heterooctamer of six TSN and two TSNAX subunits, DNA/RNA binding occurs inside the ring.

The protein resides in the cytoplasm. The protein localises to the nucleus. DNA-binding protein that specifically recognizes consensus sequences at the breakpoint junctions in chromosomal translocations, mostly involving immunoglobulin (Ig)/T-cell receptor gene segments. Seems to recognize single-stranded DNA ends generated by staggered breaks occurring at recombination hot spots. Its function is as follows. Exhibits both single-stranded and double-stranded endoribonuclease activity. May act as an activator of RNA-induced silencing complex (RISC) by facilitating endonucleolytic cleavage of the siRNA passenger strand. The chain is Translin (TSN) from Cricetulus griseus (Chinese hamster).